A 512-amino-acid chain; its full sequence is GMP synthase [glutamine-hydrolyzing] (512 aa).

One can recognise a Glutamine amidotransferase type-1 domain in the interval 7–197 (TIIVLDFGSQ…VFGVCGCSEG (191 aa)). The active-site Nucleophile is Cys84. Residues His171 and Glu173 contribute to the active site. Positions 198–387 (WNMENFIEVE…LGIPDEIVWR (190 aa)) constitute a GMPS ATP-PPase domain. 225–231 (SGGVDSS) serves as a coordination point for ATP.

In terms of assembly, homodimer.

It catalyses the reaction XMP + L-glutamine + ATP + H2O = GMP + L-glutamate + AMP + diphosphate + 2 H(+). It functions in the pathway purine metabolism; GMP biosynthesis; GMP from XMP (L-Gln route): step 1/1. Functionally, catalyzes the synthesis of GMP from XMP. The protein is GMP synthase [glutamine-hydrolyzing] of Bacillus cereus (strain B4264).